We begin with the raw amino-acid sequence, 356 residues long: Calcium/calmodulin-dependent protein kinase type 1 (356 aa).

Positions 2–7 (PLFKRR) match the Nuclear localization signal motif. The Protein kinase domain occupies 22–278 (YDFRDVLGTG…CQSALEHPWI (257 aa)). Residues 28–36 (LGTGAFSKV) and Lys-52 each bind ATP. The Proton acceptor role is filled by Asp-144. At Thr-179 the chain carries Phosphothreonine; by ckk-1. Residues 278–318 (ISGNTAYTHDIHRTVAVHLKKSLAKRNWKKAFNAAAAIRQL) are autoinhibitory domain. The calmodulin-binding stretch occupies residues 298-319 (KSLAKRNWKKAFNAAAAIRQLQ).

It belongs to the protein kinase superfamily. CAMK Ser/Thr protein kinase family. CaMK subfamily. Requires Mg(2+) as cofactor.

The protein localises to the nucleus. It is found in the cytoplasm. It catalyses the reaction L-seryl-[protein] + ATP = O-phospho-L-seryl-[protein] + ADP + H(+). The enzyme catalyses L-threonyl-[protein] + ATP = O-phospho-L-threonyl-[protein] + ADP + H(+). With respect to regulation, activated by Ca(2+)/calmodulin. Binding of calmodulin results in a conformational change that generates functional binding sites for both substrate and ATP, and thus relieves autoinhibition and lowers the Km of substrate binding. Must be phosphorylated by ckk-1 to be maximally active but this does not appear to be required for activity in AFD neurons. In terms of biological role, calcium/calmodulin-dependent protein kinase that operates in the calcium-triggered CaMKK-CaMK1 signaling cascade which results in transcriptional activation. Transcriptional activation occurs at least in part through phosphorylation of crh-1. Regulates gene expression, sensory morphology, and function of the AFD thermosensory neurons. Involved in long-term adaptation of AFD neurons to temperatures warmer than the initial acclimatized cultivation temperature. Acts in the FLP thermal nociceptors to moderate the responsiveness to noxious heat and controls neuropeptide release from FLP neurons in response to temperature elevations. Regulates the dauer decision, the decision of the larvae to enter into the alternative stress-resistant and long-lived dauer developmental stage, based on the feeding state, primarily in the AWC sensory neurons. Acts non cell-autonomously in the AWC neurons to regulate expression of the daf-28 insulin-like peptide and cell-autonomously in the ASI sensory neurons to regulate expression of the growth promoting daf-7 in a food-regulated manner. Plays a role in memory-based thermal response of an individual AFD neuron cell. Involved in chemotaxis response in AWC neurons to attractant 2-heptanone, a volatile organic compound emitted by the nematode pathogenic bacterium B.nematocida B16. Represses transcription of glutamate receptor glr-1 in the nucleus basally and in response to change in synaptic activity. The chain is Calcium/calmodulin-dependent protein kinase type 1 (cmk-1) from Caenorhabditis briggsae.